Reading from the N-terminus, the 206-residue chain is 3-demethoxyubiquinol 3-hydroxylase (206 aa).

Fe cation-binding residues include glutamate 55, glutamate 85, histidine 88, glutamate 137, glutamate 169, and histidine 172.

The protein belongs to the COQ7 family. The cofactor is Fe cation.

The protein localises to the cell membrane. The enzyme catalyses a 5-methoxy-2-methyl-3-(all-trans-polyprenyl)benzene-1,4-diol + AH2 + O2 = a 3-demethylubiquinol + A + H2O. The protein operates within cofactor biosynthesis; ubiquinone biosynthesis. Its function is as follows. Catalyzes the hydroxylation of 2-nonaprenyl-3-methyl-6-methoxy-1,4-benzoquinol during ubiquinone biosynthesis. In Chromobacterium violaceum (strain ATCC 12472 / DSM 30191 / JCM 1249 / CCUG 213 / NBRC 12614 / NCIMB 9131 / NCTC 9757 / MK), this protein is 3-demethoxyubiquinol 3-hydroxylase.